Reading from the N-terminus, the 789-residue chain is Disintegrin and metalloproteinase domain-containing protein 7 (789 aa).

The first 23 residues, 1 to 23 (MLTTGIFWMTVLISHIQERGIVG), serve as a signal peptide directing secretion. Residues 24–176 (VEGQELVHPK…NHSCVGLNFT (153 aa)) constitute a propeptide that is removed on maturation. Over 24–667 (VEGQELVHPK…EWGEALNLTS (644 aa)) the chain is Extracellular. N-linked (GlcNAc...) asparagine glycosylation is found at Asn-84, Asn-167, and Asn-174. Residues 199-393 (KFIELFVVAD…QKPACILNNP (195 aa)) enclose the Peptidase M12B domain. Intrachain disulfides connect Cys-310/Cys-388, Cys-350/Cys-372, Cys-352/Cys-357, and Cys-459/Cys-479. The Disintegrin domain occupies 401 to 487 (YPFCGNKKVD…ECPKDEFQAN (87 aa)). Residues Asn-583, Asn-628, and Asn-664 are each glycosylated (N-linked (GlcNAc...) asparagine). The helical transmembrane segment at 668–689 (VSIMVIVLVMVIIGVGLVILLI) threads the bilayer. Topologically, residues 690–789 (RYQKCIKMKQ…DTQSGCERLG (100 aa)) are cytoplasmic. The tract at residues 764–789 (RGIADPKQTDNVNLNLDTQSGCERLG) is disordered. Over residues 772–789 (TDNVNLNLDTQSGCERLG) the composition is skewed to polar residues.

As to quaternary structure, interacts with ITM2B in sperm; the interaction increases following capacitation. Interacts with HSPA5 and CANX. In terms of tissue distribution, expressed in both the head and tails of sperm (at protein level). Expressed in the epididymis (at protein level). Abundantly expressed in the apical region of the proximal caput epididymal epithelium, with decreasing expression in the mid and distal caput epididymal epithelium.

It is found in the membrane. Functionally, required for normal male fertility via maintenance of epithelial cell morphology in the caput epididymis and subsequently correct epididymis lumen structure required for sperm development. Plays a role in sperm motility, flagella morphology and tyrosine phosphorylation during sperm capacitance. Plays a role in normal expression levels of HSPA5, ITM2B and ADAM2 in sperm both prior to and post-capacitation. This is a non catalytic metalloprotease-like protein. This is Disintegrin and metalloproteinase domain-containing protein 7 from Mus musculus (Mouse).